The primary structure comprises 451 residues: L,D-transpeptidase 5 (451 aa).

The L,D-TPase catalytic domain maps to 263 to 384 (QVVKAEVSSH…AVYGDPVEVT (122 aa)). Substrate contacts are provided by residues tyrosine 323 and 337–338 (NG). The Proton donor/acceptor role is filled by histidine 342. Catalysis depends on cysteine 360, which acts as the Nucleophile. Residue asparagine 362 coordinates substrate. The interval 417-451 (AAKPAATQIPVTAPVTPSDAPTPSGTPTTTNGPGG) is disordered. Over residues 437–451 (PTPSGTPTTTNGPGG) the composition is skewed to low complexity.

The protein operates within cell wall biogenesis; peptidoglycan biosynthesis. In contrast to other LDT paralogs, LdtMt5 is not inactivated by the beta-lactam carbapenems; beta-lactam carbapenems form covalent adducts with other LDT paralogs but the formation of covalent adducts was not detected for LdtMt5. Functionally, generates 3-&gt;3 cross-links in peptidoglycan, catalyzing the cleavage of the mDap(3)-D-Ala(4) bond of a tetrapeptide donor stem and the formation of a bond between the carbonyl of mDap(3) of the donor stem and the side chain of mDap(3) of the acceptor stem. Is specific for donor substrates containing a stem tetrapeptide since it cannot use pentapeptide stems. The chain is L,D-transpeptidase 5 (lprQ) from Mycobacterium tuberculosis (strain ATCC 25618 / H37Rv).